Here is a 234-residue protein sequence, read N- to C-terminus: Bromodomain-containing protein DDB_G0271118 (234 aa).

Positions 1–60 (MDLGTIKGELDNNGYSTIKDFTADVRLMFENALTYNADSSPIWKHAKTLLYFHRKHDEHV) constitute a Bromo domain. The segment covering 134–194 (NNNSNNNNNN…SSSSSSSSSS (61 aa)) has biased composition (low complexity). Residues 134 to 209 (NNNSNNNNNN…KKYSDEERRN (76 aa)) are disordered.

The chain is Bromodomain-containing protein DDB_G0271118 from Dictyostelium discoideum (Social amoeba).